We begin with the raw amino-acid sequence, 86 residues long: MKTLLLTLVVLTIACLDLGYTKTCFNDDLTNPKTTELCRHSVYFCFKNSRIAGGVERMQRGCSLTCPDIKYNGKYIYCCTRDNCNA.

The signal sequence occupies residues 1 to 21 (MKTLLLTLVVLTIACLDLGYT). Intrachain disulfides connect Cys-24–Cys-45, Cys-38–Cys-62, Cys-66–Cys-78, and Cys-79–Cys-84.

It belongs to the three-finger toxin family. Short-chain subfamily. Orphan group IX sub-subfamily. Expressed by the venom gland.

The protein localises to the secreted. The protein is Cardiotoxin homolog TA-ctx-like of Bungarus multicinctus (Many-banded krait).